Here is a 253-residue protein sequence, read N- to C-terminus: DNA repair protein RecO (253 aa).

The protein belongs to the RecO family.

Involved in DNA repair and RecF pathway recombination. The protein is DNA repair protein RecO of Pediococcus pentosaceus (strain ATCC 25745 / CCUG 21536 / LMG 10740 / 183-1w).